The following is a 512-amino-acid chain: Maturase K (512 aa).

It belongs to the intron maturase 2 family. MatK subfamily.

It is found in the plastid. Its subcellular location is the chloroplast. Usually encoded in the trnK tRNA gene intron. Probably assists in splicing its own and other chloroplast group II introns. The protein is Maturase K of Lilium regale (Regal lily).